Reading from the N-terminus, the 702-residue chain is Polyribonucleotide nucleotidyltransferase (702 aa).

Residues Asp-485 and Asp-491 each contribute to the Mg(2+) site. The 60-residue stretch at 552–611 folds into the KH domain; sequence PKTSTLQIDPEKIRDVIGAGGKVINKIIADTGVKIDIKEDGLVYVSSAESEGVKEAVKII. Residues 621–689 enclose the S1 motif domain; sequence GEIYLGKVTK…SQGRINLSRK (69 aa).

Belongs to the polyribonucleotide nucleotidyltransferase family. Mg(2+) serves as cofactor.

The protein localises to the cytoplasm. The catalysed reaction is RNA(n+1) + phosphate = RNA(n) + a ribonucleoside 5'-diphosphate. In terms of biological role, involved in mRNA degradation. Catalyzes the phosphorolysis of single-stranded polyribonucleotides processively in the 3'- to 5'-direction. This is Polyribonucleotide nucleotidyltransferase from Clostridium perfringens (strain 13 / Type A).